The chain runs to 412 residues: Putative phosphate permease PF1020 (412 aa).

The next 10 membrane-spanning stretches (helical) occupy residues 7–27 (MLAD…AWAI), 50–70 (AVII…KTVT), 88–108 (VLIF…VIAT), 119–139 (SIIG…IVNW), 143–163 (IKVV…AYLV), 187–207 (FWIG…VLHG), 213–233 (GFLK…SLIL), 298–318 (WILA…GYKV), 335–355 (FTID…GMPI), and 384–404 (DIII…GIIF).

This sequence belongs to the inorganic phosphate transporter (PiT) (TC 2.A.20) family.

The protein localises to the cell membrane. Potential transporter for phosphate. The chain is Putative phosphate permease PF1020 from Pyrococcus furiosus (strain ATCC 43587 / DSM 3638 / JCM 8422 / Vc1).